The sequence spans 102 residues: Small ribosomal subunit protein uS10c (102 aa).

This sequence belongs to the universal ribosomal protein uS10 family. Part of the 30S ribosomal subunit.

It is found in the plastid. Its subcellular location is the chloroplast. In terms of biological role, involved in the binding of tRNA to the ribosomes. The polypeptide is Small ribosomal subunit protein uS10c (Guillardia theta (Cryptophyte)).